Here is a 449-residue protein sequence, read N- to C-terminus: Lipase (449 aa).

The first 23 residues, 1–23, serve as a signal peptide directing secretion; that stretch reads MGVFDYKNLGTEASKTLFADATA. Residues 58 to 77 are disordered; that stretch reads RQHRLPGSDPPAFPGILTRK. Serine 206 (charge relay system) is an active-site residue. The Ca(2+) site is built by glycine 318, aspartate 387, and aspartate 396. Hemolysin-type calcium-binding repeat units lie at residues 372-389 and 390-407; these read IGSD…ADFI and EGGK…HNTF.

It belongs to the AB hydrolase superfamily. Lipase family.

The catalysed reaction is a triacylglycerol + H2O = a diacylglycerol + a fatty acid + H(+). The polypeptide is Lipase (Pseudomonas fluorescens).